The sequence spans 289 residues: NADPH-dependent 7-cyano-7-deazaguanine reductase (289 aa).

81-83 (IES) serves as a coordination point for substrate. Position 83-84 (83-84 (SK)) interacts with NADPH. Residue cysteine 196 is the Thioimide intermediate of the active site. Aspartate 203 acts as the Proton donor in catalysis. 235–236 (HE) contributes to the substrate binding site. Position 264-265 (264-265 (RG)) interacts with NADPH.

This sequence belongs to the GTP cyclohydrolase I family. QueF type 2 subfamily. Homodimer.

The protein resides in the cytoplasm. The catalysed reaction is 7-aminomethyl-7-carbaguanine + 2 NADP(+) = 7-cyano-7-deazaguanine + 2 NADPH + 3 H(+). It participates in tRNA modification; tRNA-queuosine biosynthesis. In terms of biological role, catalyzes the NADPH-dependent reduction of 7-cyano-7-deazaguanine (preQ0) to 7-aminomethyl-7-deazaguanine (preQ1). The protein is NADPH-dependent 7-cyano-7-deazaguanine reductase of Albidiferax ferrireducens (strain ATCC BAA-621 / DSM 15236 / T118) (Rhodoferax ferrireducens).